Here is a 764-residue protein sequence, read N- to C-terminus: 5-methyltetrahydropteroyltriglutamate--homocysteine methyltransferase (764 aa).

Residues 16–19 (RELK) and K117 each bind 5-methyltetrahydropteroyltri-L-glutamate. L-homocysteine is bound by residues 442–444 (IGS) and E495. L-methionine-binding positions include 442–444 (IGS) and E495. 5-methyltetrahydropteroyltri-L-glutamate-binding positions include 526-527 (RC) and W572. D610 lines the L-homocysteine pocket. D610 contacts L-methionine. E616 serves as a coordination point for 5-methyltetrahydropteroyltri-L-glutamate. 3 residues coordinate Zn(2+): H652, C654, and E676. The active-site Proton donor is the H705. C737 provides a ligand contact to Zn(2+).

It belongs to the vitamin-B12 independent methionine synthase family. The cofactor is Zn(2+).

It carries out the reaction 5-methyltetrahydropteroyltri-L-glutamate + L-homocysteine = tetrahydropteroyltri-L-glutamate + L-methionine. It functions in the pathway amino-acid biosynthesis; L-methionine biosynthesis via de novo pathway; L-methionine from L-homocysteine (MetE route): step 1/1. Functionally, catalyzes the transfer of a methyl group from 5-methyltetrahydrofolate to homocysteine resulting in methionine formation. The chain is 5-methyltetrahydropteroyltriglutamate--homocysteine methyltransferase from Bordetella pertussis (strain Tohama I / ATCC BAA-589 / NCTC 13251).